We begin with the raw amino-acid sequence, 451 residues long: tRNA(Ile)-lysidine synthase (451 aa).

21 to 26 (SGGLDS) provides a ligand contact to ATP.

The protein belongs to the tRNA(Ile)-lysidine synthase family.

The protein resides in the cytoplasm. It carries out the reaction cytidine(34) in tRNA(Ile2) + L-lysine + ATP = lysidine(34) in tRNA(Ile2) + AMP + diphosphate + H(+). Functionally, ligates lysine onto the cytidine present at position 34 of the AUA codon-specific tRNA(Ile) that contains the anticodon CAU, in an ATP-dependent manner. Cytidine is converted to lysidine, thus changing the amino acid specificity of the tRNA from methionine to isoleucine. This Yersinia pseudotuberculosis serotype O:1b (strain IP 31758) protein is tRNA(Ile)-lysidine synthase.